The chain runs to 500 residues: Ent-cassadiene C11-alpha-hydroxylase 1 (500 aa).

A helical membrane pass occupies residues 4 to 24; it reads SQVWLLWGALSVAVLFYLSTL. Cys442 provides a ligand contact to heme.

Belongs to the cytochrome P450 family. Heme serves as cofactor.

Its subcellular location is the membrane. The catalysed reaction is ent-cassa-12,15-diene + reduced [NADPH--hemoprotein reductase] + O2 = ent-11beta-hydroxycassa-12,15-diene + oxidized [NADPH--hemoprotein reductase] + H2O + H(+). Functionally, enzyme of the diterpenoid metabolism involved in the biosynthesis of antibacterial oryzalides such as phytocassane. Can use ent-cassadiene as substrate, but not C11-alpha-hydroxy-ent-cassadiene, ent-pimaradiene, ent-sandaracopimaradiene, ent-kaurene, ent-isokaurene, syn-pimaradiene, syn-stemarene, syn-stemodene. This chain is Ent-cassadiene C11-alpha-hydroxylase 1, found in Oryza sativa subsp. japonica (Rice).